Consider the following 237-residue polypeptide: Uridylate kinase (237 aa).

Lys9–Gly12 is a binding site for ATP. UMP is bound at residue Gly51. Gly52 and Arg56 together coordinate ATP. Residues Asp71 and Cys132–Thr139 contribute to the UMP site. ATP is bound by residues Thr159, Tyr165, and Asp168.

It belongs to the UMP kinase family. As to quaternary structure, homohexamer.

It is found in the cytoplasm. The catalysed reaction is UMP + ATP = UDP + ADP. Its pathway is pyrimidine metabolism; CTP biosynthesis via de novo pathway; UDP from UMP (UMPK route): step 1/1. With respect to regulation, inhibited by UTP. Catalyzes the reversible phosphorylation of UMP to UDP. The protein is Uridylate kinase of Prochlorococcus marinus (strain MIT 9303).